Consider the following 255-residue polypeptide: Phosphate import ATP-binding protein PstB (255 aa).

The region spanning 10–250 is the ABC transporter domain; that stretch reads INIKDLNLWY…PQMKSTEDYI (241 aa). 42 to 49 is a binding site for ATP; sequence GPSGCGKS.

This sequence belongs to the ABC transporter superfamily. Phosphate importer (TC 3.A.1.7) family. In terms of assembly, the complex is composed of two ATP-binding proteins (PstB), two transmembrane proteins (PstC and PstA) and a solute-binding protein (PstS).

It is found in the cell membrane. The catalysed reaction is phosphate(out) + ATP + H2O = ADP + 2 phosphate(in) + H(+). Functionally, part of the ABC transporter complex PstSACB involved in phosphate import. Responsible for energy coupling to the transport system. The protein is Phosphate import ATP-binding protein PstB of Methanococcoides burtonii (strain DSM 6242 / NBRC 107633 / OCM 468 / ACE-M).